Here is a 537-residue protein sequence, read N- to C-terminus: MGGAGILLLLLAGAGVVVAWRPPKGKCPLRCSCSKDSALCEGSPDLPVSFSPTLLSLSLVRTGVTQLKAGSFLRIPSLHLLLFTSNSFSVIEDDAFAGLSHLQYLFIEDNEIGSISKNALRGLRSLTHLSLANNHLETLPRFLFRGLDTLTHVDLRGNPFQCDCRVLWLLQWMPTVNASVGTGACAGPASLSHMQLHHLDPKTFKCRAIELSWFQTVGESALSVEPFSYQGEPHIVLAQPFAGRCLILSWDYSLQRFRPEEELPAASVVSCKPLVLGPSLFVLAARLWGGSQLWARPSPGLRLAPTQTLAPRRLLRPNDAELLWLEGQPCFVVADASKAGSTTLLCRDGPGFYPHQSLHAWHRDTDAEALELDGRPHLLLASASQRPVLFHWTGGRFERRTDIPEAEDVYATRHFQAGGDVFLCLTRYIGDSMVMRWDGSMFRLLQQLPSRGAHVFQPLLIARDQLAILGSDFAFSQVLRLEPDKGLLEPLQELGPPALVAPRAFAHITMAGRRFLFAACFKGPTQIYQHHEIDLSA.

The N-terminal stretch at methionine 1–alanine 19 is a signal peptide. LRR repeat units follow at residues threonine 53–arginine 74, serine 77–glycine 98, histidine 101–glycine 122, and serine 125–glycine 146. The 51-residue stretch at asparagine 158–alanine 208 folds into the LRRCT domain. An N-linked (GlcNAc...) asparagine glycan is attached at asparagine 177. EAR repeat units follow at residues glutamate 210–tyrosine 252, arginine 256–serine 298, arginine 302–glycine 349, glycine 351–glycine 394, arginine 396–glycine 439, methionine 441–proline 483, and leucine 487–glutamate 532.

As to quaternary structure, can bind to ADAM11, ADAM22 and ADAM23. In terms of tissue distribution, widely expressed, with highest expression in brain.

Its subcellular location is the secreted. Its function is as follows. Component of Schwann cell signaling pathway(s) that controls axon segregation and myelin formation. In Homo sapiens (Human), this protein is Leucine-rich repeat LGI family member 4 (LGI4).